We begin with the raw amino-acid sequence, 63 residues long: uncharacterized protein (63 aa).

Residues 4 to 24 (LNQFILIFLLLIVILFIFFLI) traverse the membrane as a helical segment.

The protein localises to the membrane. This is an uncharacterized protein from Invertebrate iridescent virus 6 (IIV-6).